The chain runs to 546 residues: UDP-glycosyltransferase FPY2 (546 aa).

The first 20 residues, 1–20 (MSLPKAQILVVVTVGGSTNS), serve as a signal peptide directing secretion. The chain crosses the membrane as a helical span at residues 517–537 (LNNIDVALLFFILLGIISWIT).

It belongs to the glycosyltransferase 28 family.

Its subcellular location is the membrane. It functions in the pathway secondary metabolite biosynthesis. Its function is as follows. UDP-glycosyltransferase; part of the gene cluster that mediates the biosynthesis of the gamma-pyrones fusapyrone (FPY) and deoxyfusapyrone (dFPY). FPY is an undecaketide and thus likely synthesized by the polyketide synthase FPY1 from acetyl-CoA functioning as starter unit and the addition of 10 malonyl-CoA extender units by successive Claisen-condensations. Next to this, FPY shares some rare features: C-glycosylated 4-deoxyglucose at C-3, a gem-dimethyl group at C-13, and an alpha-beta to beta-gamma double bond shift at C-20. During FPY biosynthesis mono-C-methyl groups are transferred to the tetra-, penta-, hexa- and heptaketide, while two C-methyl groups are transferred to the nonaketide, suggesting that the CMet domain is programmed to selectively catalyze two successive C-alpha-methylation reactions of the nonaketide, while other alpha-carbons are non- or mono-methylated only. While the origin of the 4'-deoxyglucose moiety remains opaque, its transfer to C-3 is most likely mediated by the C-glycosyltransferase FPY2. Next to this, the hydroxyl group present at C-33 and discriminating between FPY and dFPY, is likely to be installed by the cytochrome P450 monooxygenase FPY7. No putative function can be predicted for the remaining genes FPY3-FPY6. In Fusarium mangiferae (Mango malformation disease fungus), this protein is UDP-glycosyltransferase FPY2.